The primary structure comprises 203 residues: Urease accessory protein UreE (203 aa).

The tract at residues 170–203 (EHHGHSHSHSHSHSHDHDHQHGPSCSHGHHHGHR) is disordered.

It belongs to the UreE family.

It is found in the cytoplasm. In terms of biological role, involved in urease metallocenter assembly. Binds nickel. Probably functions as a nickel donor during metallocenter assembly. The chain is Urease accessory protein UreE from Burkholderia mallei (strain SAVP1).